The primary structure comprises 279 residues: Tryptophan 2,3-dioxygenase (279 aa).

Residues 48 to 52 (FIVIH), Tyr-110, and Arg-114 contribute to the substrate site. His-237 is a binding site for heme. Thr-251 contacts substrate.

Belongs to the tryptophan 2,3-dioxygenase family. In terms of assembly, homotetramer. Heme serves as cofactor.

The enzyme catalyses L-tryptophan + O2 = N-formyl-L-kynurenine. Its pathway is amino-acid degradation; L-tryptophan degradation via kynurenine pathway; L-kynurenine from L-tryptophan: step 1/2. Heme-dependent dioxygenase that catalyzes the oxidative cleavage of the L-tryptophan (L-Trp) pyrrole ring and converts L-tryptophan to N-formyl-L-kynurenine. Catalyzes the oxidative cleavage of the indole moiety. In Bacillus thuringiensis (strain Al Hakam), this protein is Tryptophan 2,3-dioxygenase.